Here is a 527-residue protein sequence, read N- to C-terminus: RUS family member 1 (527 aa).

An N-linked (GlcNAc...) asparagine glycan is attached at Asn21. The chain crosses the membrane as a helical span at residues 220-240; the sequence is SQETAVNLVGMLLSVIVSSFI. A glycan (N-linked (GlcNAc...) asparagine) is linked at Asn243. The helical transmembrane segment at 245–265 threads the bilayer; sequence SLIVTWLVFLFFTSLHLFCNY. An N-linked (GlcNAc...) asparagine glycan is attached at Asn346. Residues 350–426 form a disordered region; sequence TKNVNNNNNN…NNNNNNNNNK (77 aa). 2 N-linked (GlcNAc...) asparagine glycosylation sites follow: Asn467 and Asn497.

Belongs to the RUS1 family.

It is found in the membrane. This is RUS family member 1 (rusf1) from Dictyostelium discoideum (Social amoeba).